The sequence spans 497 residues: Aspartyl/glutamyl-tRNA(Asn/Gln) amidotransferase subunit B (497 aa).

This sequence belongs to the GatB/GatE family. GatB subfamily. In terms of assembly, heterotrimer of A, B and C subunits.

The enzyme catalyses L-glutamyl-tRNA(Gln) + L-glutamine + ATP + H2O = L-glutaminyl-tRNA(Gln) + L-glutamate + ADP + phosphate + H(+). It carries out the reaction L-aspartyl-tRNA(Asn) + L-glutamine + ATP + H2O = L-asparaginyl-tRNA(Asn) + L-glutamate + ADP + phosphate + 2 H(+). Its function is as follows. Allows the formation of correctly charged Asn-tRNA(Asn) or Gln-tRNA(Gln) through the transamidation of misacylated Asp-tRNA(Asn) or Glu-tRNA(Gln) in organisms which lack either or both of asparaginyl-tRNA or glutaminyl-tRNA synthetases. The reaction takes place in the presence of glutamine and ATP through an activated phospho-Asp-tRNA(Asn) or phospho-Glu-tRNA(Gln). This is Aspartyl/glutamyl-tRNA(Asn/Gln) amidotransferase subunit B from Novosphingobium aromaticivorans (strain ATCC 700278 / DSM 12444 / CCUG 56034 / CIP 105152 / NBRC 16084 / F199).